The primary structure comprises 494 residues: Probable cytosol aminopeptidase (494 aa).

Lys-260 and Asp-265 together coordinate Mn(2+). Residue Lys-272 is part of the active site. Asp-283, Asp-342, and Glu-344 together coordinate Mn(2+). Residue Arg-346 is part of the active site.

This sequence belongs to the peptidase M17 family. The cofactor is Mn(2+).

It is found in the cytoplasm. The enzyme catalyses Release of an N-terminal amino acid, Xaa-|-Yaa-, in which Xaa is preferably Leu, but may be other amino acids including Pro although not Arg or Lys, and Yaa may be Pro. Amino acid amides and methyl esters are also readily hydrolyzed, but rates on arylamides are exceedingly low.. It carries out the reaction Release of an N-terminal amino acid, preferentially leucine, but not glutamic or aspartic acids.. Functionally, presumably involved in the processing and regular turnover of intracellular proteins. Catalyzes the removal of unsubstituted N-terminal amino acids from various peptides. This is Probable cytosol aminopeptidase from Bacillus cereus (strain ZK / E33L).